Reading from the N-terminus, the 749-residue chain is Formate acetyltransferase (749 aa).

In terms of domain architecture, PFL spans 3–619 (ETNKNHATAW…KTGNTPDGRK (617 aa)). Catalysis depends on C413, which acts as the S-acetylcysteine intermediate. The Cysteine radical intermediate role is filled by C414. The Glycine radical domain maps to 626 to 749 (PGANPMHGRD…VISRTFHESM (124 aa)). Residue G724 is modified to Glycine radical.

It belongs to the glycyl radical enzyme (GRE) family. PFL subfamily. Homodimer.

The protein localises to the cytoplasm. It catalyses the reaction formate + acetyl-CoA = pyruvate + CoA. It participates in fermentation; pyruvate fermentation; formate from pyruvate: step 1/1. Functionally, catalyzes the conversion of pyruvate to formate and acetyl-CoA. The sequence is that of Formate acetyltransferase (pflB) from Staphylococcus aureus (strain USA300).